We begin with the raw amino-acid sequence, 40 residues long: Photosystem II reaction center protein J (40 aa).

N-acetylmethionine is present on Met2. The Cytoplasmic segment spans residues 2–11 (MSEGGRIPLW). The helical transmembrane segment at 12–26 (IVATVAGMGVIVIVG) threads the bilayer. The Lumenal segment spans residues 27 to 40 (LFFYGAYAGLGSSL).

Belongs to the PsbJ family. As to quaternary structure, PSII is composed of 1 copy each of membrane proteins PsbA, PsbB, PsbC, PsbD, PsbE, PsbF, PsbH, PsbI, PsbJ, PsbK, PsbL, PsbM, PsbT, PsbX, PsbY, PsbZ, Psb30/Ycf12, peripheral proteins PsbO, CyanoQ (PsbQ), PsbU, PsbV and a large number of cofactors. It forms dimeric complexes. PSII binds multiple chlorophylls, carotenoids and specific lipids. is required as a cofactor.

Its subcellular location is the cellular thylakoid membrane. Its function is as follows. One of the components of the core complex of photosystem II (PSII). PSII is a light-driven water:plastoquinone oxidoreductase that uses light energy to abstract electrons from H(2)O, generating O(2) and a proton gradient subsequently used for ATP formation. It consists of a core antenna complex that captures photons, and an electron transfer chain that converts photonic excitation into a charge separation. In terms of biological role, may play a regulatory role in PSII biogenesis. The sequence is that of Photosystem II reaction center protein J from Thermosynechococcus vestitus (strain NIES-2133 / IAM M-273 / BP-1).